We begin with the raw amino-acid sequence, 284 residues long: 2-dehydro-3-deoxyphosphooctonate aldolase (284 aa).

The protein belongs to the KdsA family.

The protein resides in the cytoplasm. The catalysed reaction is D-arabinose 5-phosphate + phosphoenolpyruvate + H2O = 3-deoxy-alpha-D-manno-2-octulosonate-8-phosphate + phosphate. The protein operates within carbohydrate biosynthesis; 3-deoxy-D-manno-octulosonate biosynthesis; 3-deoxy-D-manno-octulosonate from D-ribulose 5-phosphate: step 2/3. It participates in bacterial outer membrane biogenesis; lipopolysaccharide biosynthesis. This chain is 2-dehydro-3-deoxyphosphooctonate aldolase, found in Burkholderia cenocepacia (strain ATCC BAA-245 / DSM 16553 / LMG 16656 / NCTC 13227 / J2315 / CF5610) (Burkholderia cepacia (strain J2315)).